The primary structure comprises 111 residues: MEAKATAKYVRVSPRKAGQICDLVRGKNVDEALAILKFTPRGAASIIAKVVKSAKANAENNHEMDTEKLYIASIVANQGPTMKRFMPRAMGRATTIRKRTSHIEVVVKEKK.

The protein belongs to the universal ribosomal protein uL22 family. In terms of assembly, part of the 50S ribosomal subunit.

In terms of biological role, this protein binds specifically to 23S rRNA; its binding is stimulated by other ribosomal proteins, e.g. L4, L17, and L20. It is important during the early stages of 50S assembly. It makes multiple contacts with different domains of the 23S rRNA in the assembled 50S subunit and ribosome. Its function is as follows. The globular domain of the protein is located near the polypeptide exit tunnel on the outside of the subunit, while an extended beta-hairpin is found that lines the wall of the exit tunnel in the center of the 70S ribosome. This is Large ribosomal subunit protein uL22 from Clostridioides difficile (strain 630) (Peptoclostridium difficile).